Here is a 111-residue protein sequence, read N- to C-terminus: Aspartate 1-decarboxylase (111 aa).

The active-site Schiff-base intermediate with substrate; via pyruvic acid is the Ser25. At Ser25 the chain carries Pyruvic acid (Ser). Thr57 lines the substrate pocket. The Proton donor role is filled by Tyr58. 73 to 75 (GPA) provides a ligand contact to substrate.

It belongs to the PanD family. In terms of assembly, heterooctamer of four alpha and four beta subunits. Pyruvate serves as cofactor. Post-translationally, is synthesized initially as an inactive proenzyme, which is activated by self-cleavage at a specific serine bond to produce a beta-subunit with a hydroxyl group at its C-terminus and an alpha-subunit with a pyruvoyl group at its N-terminus.

Its subcellular location is the cytoplasm. It carries out the reaction L-aspartate + H(+) = beta-alanine + CO2. It participates in cofactor biosynthesis; (R)-pantothenate biosynthesis; beta-alanine from L-aspartate: step 1/1. Functionally, catalyzes the pyruvoyl-dependent decarboxylation of aspartate to produce beta-alanine. This is Aspartate 1-decarboxylase from Francisella tularensis subsp. holarctica (strain LVS).